Here is a 311-residue protein sequence, read N- to C-terminus: Halocin-S8 (311 aa).

2 propeptides span residues 1 to 230 and 267 to 311; these read MSDK…IQLQ and TVAC…TSFW.

It localises to the secreted. In terms of biological role, has antibacterial activity against the haloarchaeons H.salinarium NRC817, Halobacterium GRB and H.gibbonsii. The chain is Halocin-S8 (halS8) from Haloarchaeon S8a.